A 518-amino-acid chain; its full sequence is E3 ubiquitin-protein ligase TRIM39 (518 aa).

The RING-type zinc-finger motif lies at 29–70 (CSVCLEYLKEPVIIECGHNFCKACITRWWEDLERDFPCPVCR). The B box-type zinc finger occupies 102-143 (RDESLCPQHHEALSLFCYEDQEAVCLICAISHTHRAHTVVPL). Zn(2+) is bound by residues cysteine 107, histidine 110, cysteine 129, and histidine 135. Residues 181 to 250 (ELKRLVESRR…AHLAAEVEGK (70 aa)) are a coiled coil. 2 interaction with CDKN1A regions span residues 268 to 337 (KNIP…QLIA) and 389 to 518 (TSGR…TDWE). The region spanning 319–514 (SNFPRQYFAL…NAAPLTIRPP (196 aa)) is the B30.2/SPRY domain.

This sequence belongs to the TRIM/RBCC family. In terms of assembly, interacts with MOAP1. Interacts with CDKN1A. Autoubiquitinated.

The protein localises to the cytoplasm. The protein resides in the cytosol. It localises to the mitochondrion. Its subcellular location is the nucleus. The enzyme catalyses S-ubiquitinyl-[E2 ubiquitin-conjugating enzyme]-L-cysteine + [acceptor protein]-L-lysine = [E2 ubiquitin-conjugating enzyme]-L-cysteine + N(6)-ubiquitinyl-[acceptor protein]-L-lysine.. Its pathway is protein modification; protein ubiquitination. E3 ubiquitin-protein ligase. May facilitate apoptosis by inhibiting APC/C-Cdh1-mediated poly-ubiquitination and subsequent proteasome-mediated degradation of the pro-apoptotic protein MOAP1. Regulates the G1/S transition of the cell cycle and DNA damage-induced G2 arrest by stabilizing CDKN1A/p21. Positively regulates CDKN1A/p21 stability by competing with DTL for CDKN1A/p21 binding, therefore disrupting DCX(DTL) E3 ubiquitin ligase complex-mediated CDKN1A/p21 ubiquitination and degradation. This is E3 ubiquitin-protein ligase TRIM39 (TRIM39) from Pan troglodytes (Chimpanzee).